The chain runs to 363 residues: Probable protein phosphatase 2C member 13, mitochondrial (363 aa).

A mitochondrion-targeting transit peptide spans M1–A59. Residues K111–F357 form the PPM-type phosphatase domain. Residues D147, G148, D309, and D348 each contribute to the Mn(2+) site.

It belongs to the PP2C family. Requires Mg(2+) as cofactor. The cofactor is Mn(2+). Highly expressed in mature pollen grains.

It localises to the mitochondrion. The enzyme catalyses O-phospho-L-seryl-[protein] + H2O = L-seryl-[protein] + phosphate. The catalysed reaction is O-phospho-L-threonyl-[protein] + H2O = L-threonyl-[protein] + phosphate. In terms of biological role, probable protein phosphatase that may play a role as a mitochondrial signal transduction mediator in pollen germination. May function in retrograde signaling from the mitochondria to the nucleus. May be a downstream factor of cytoplasmic male sterility (CMS). CMS is caused by genetic incompatibility between nuclei and mitochondria within male reproductive organs. The protein is Probable protein phosphatase 2C member 13, mitochondrial of Oryza sativa subsp. japonica (Rice).